A 91-amino-acid polypeptide reads, in one-letter code: Early E3B 10.4 kDa protein (91 aa).

A signal peptide spans 1–22; the sequence is MIPRVLILLTLVALFCACSTLA. Residues 23–34 lie on the Lumenal side of the membrane; it reads AVAHIEVDCIPP. The helical transmembrane segment at 35 to 60 threads the bilayer; the sequence is FTVYLLYGFVTLILICSLVTVVIAFI. Residues 61 to 91 lie on the Cytoplasmic side of the membrane; the sequence is QFIDWICVRIAYLRHHPQYRDRTIADLLRIL.

Belongs to the adenoviridae E3B family.

It localises to the host endoplasmic reticulum membrane. In terms of biological role, down-regulates the EGF receptor. The chain is Early E3B 10.4 kDa protein from Homo sapiens (Human).